Consider the following 199-residue polypeptide: Oligoribonuclease (199 aa).

Residues Leu-5–Leu-170 enclose the Exonuclease domain. Tyr-127 is an active-site residue.

It belongs to the oligoribonuclease family.

The protein localises to the cytoplasm. Functionally, 3'-to-5' exoribonuclease specific for small oligoribonucleotides. In Rhodococcus jostii (strain RHA1), this protein is Oligoribonuclease.